Here is a 320-residue protein sequence, read N- to C-terminus: Putative thiosulfate sulfurtransferase (320 aa).

Positions 1–37 (MSVRSLRWPRQKAFLAVISLVVAVLLAVPGWLTPATA) are cleaved as a signal peptide. Rhodanese domains are found at residues 56 to 166 (NNKQ…PVTK) and 194 to 315 (LTGK…PVET). C274 functions as the Cysteine persulfide intermediate in the catalytic mechanism.

Its subcellular location is the periplasm. The catalysed reaction is thiosulfate + hydrogen cyanide = thiocyanate + sulfite + 2 H(+). In terms of biological role, may be a sulfotransferase involved in the transport of sulfate. Displays very low rhodanese activity. The sequence is that of Putative thiosulfate sulfurtransferase (rhdA) from Synechococcus elongatus (strain ATCC 33912 / PCC 7942 / FACHB-805) (Anacystis nidulans R2).